We begin with the raw amino-acid sequence, 235 residues long: Orotidine 5'-phosphate decarboxylase (235 aa).

Substrate is bound by residues aspartate 12, lysine 34, 61–70, threonine 116, arginine 177, glutamine 186, glycine 206, and arginine 207; that span reads DMKLLDIDNT. The active-site Proton donor is the lysine 63.

It belongs to the OMP decarboxylase family. Type 1 subfamily. In terms of assembly, homodimer.

The enzyme catalyses orotidine 5'-phosphate + H(+) = UMP + CO2. The protein operates within pyrimidine metabolism; UMP biosynthesis via de novo pathway; UMP from orotate: step 2/2. Functionally, catalyzes the decarboxylation of orotidine 5'-monophosphate (OMP) to uridine 5'-monophosphate (UMP). In Rhizobium johnstonii (strain DSM 114642 / LMG 32736 / 3841) (Rhizobium leguminosarum bv. viciae), this protein is Orotidine 5'-phosphate decarboxylase.